Consider the following 204-residue polypeptide: Urease accessory protein UreG (204 aa).

Residue 12–19 (GPVGSGKT) participates in GTP binding.

The protein belongs to the SIMIBI class G3E GTPase family. UreG subfamily. As to quaternary structure, homodimer. UreD, UreF and UreG form a complex that acts as a GTP-hydrolysis-dependent molecular chaperone, activating the urease apoprotein by helping to assemble the nickel containing metallocenter of UreC. The UreE protein probably delivers the nickel.

The protein resides in the cytoplasm. In terms of biological role, facilitates the functional incorporation of the urease nickel metallocenter. This process requires GTP hydrolysis, probably effectuated by UreG. This Streptococcus salivarius (strain 57.I) protein is Urease accessory protein UreG.